Here is a 1630-residue protein sequence, read N- to C-terminus: Transient receptor potential cation channel subfamily M member 1 (1630 aa).

Disordered stretches follow at residues 1–25 (MGSMRKMSSSFKRGSIKSSTSGSQK), 65–92 (PLPSVTPSSTAEDTKQGDAQSGKWSVSK), 453–492 (APPVDTKVAEKEKKPPTATTKGRGKGKGKKKGKVKEEVEE), 620–643 (LGMEDDEPPAKGKKKKKKKKEEEI), and 824–858 (SKENEDGKEKEEENVDANADAGSRKGDEENEHKKQ). Residues 1 to 877 (MGSMRKMSSS…CEFYNAPIVK (877 aa)) lie on the Cytoplasmic side of the membrane. Over residues 8-25 (SSSFKRGSIKSSTSGSQK) the composition is skewed to low complexity. Over residues 69 to 92 (VTPSSTAEDTKQGDAQSGKWSVSK) the composition is skewed to polar residues. The segment covering 474-485 (GRGKGKGKKKGK) has biased composition (basic residues). Composition is skewed to basic and acidic residues over residues 825–834 (KENEDGKEKE) and 845–855 (GSRKGDEENEH). Residues 878–898 (FWFYTISYLGYLLLFNYVILV) traverse the membrane as a helical segment. Residues 899–944 (RMDGWPSPQEWIVISYIVSLALEKIREILMSEPGKLSQKIKVWLQE) lie on the Extracellular side of the membrane. The chain crosses the membrane as a helical span at residues 945-965 (YWNITDLVAISMFMVGAILRL). Residues 966 to 975 (QNQPYMGYGR) are Cytoplasmic-facing. The chain crosses the membrane as a helical span at residues 976–996 (VIYCVDIILWYIRVLDIFGVN). Topologically, residues 997–1008 (KYLGPYVMMIGK) are extracellular. A helical membrane pass occupies residues 1009–1029 (MMIDMLYFVVIMLVVLMSFGV). Residues 1030-1107 (ARQAILHPEE…CIPGAWLTPA (78 aa)) lie on the Cytoplasmic side of the membrane. A helical transmembrane segment spans residues 1108-1128 (LMACYLLVANILLVNLLIAVF). Asn-1129 is a glycosylation site (N-linked (GlcNAc...) asparagine). The Extracellular portion of the chain corresponds to 1129–1158 (NNTFFEVKSISNQVWKFQRYQLIMTFHDRP). Residues 1159-1179 (VLPPPMIILSHIYIIVMRLSG) form a helical membrane-spanning segment. Residues 1180 to 1630 (RCRKKREGDQ…QEKGNPETEC (451 aa)) lie on the Cytoplasmic side of the membrane. Residues 1235-1255 (IRVTSERVENMSMRLEEINER) adopt a coiled-coil conformation. Disordered regions lie at residues 1362-1414 (EDVK…AGEL) and 1575-1630 (CLRS…ETEC).

This sequence belongs to the transient receptor (TC 1.A.4) family. LTrpC subfamily. TRPM1 sub-subfamily. As to quaternary structure, interacts with TRPM3; the interaction results in the formation of a heteromultimeric cation channel complex that are functionally different from the homomeric channels. Interacts with GPR179. Associates with both guanine nucleotide-binding proteins G(o) and beta-gamma G protein dimer; implicated in directly regulating TRPM1 channel open-state.

The protein localises to the cell membrane. The protein resides in the endoplasmic reticulum membrane. It localises to the cell projection. It is found in the axon. It carries out the reaction Ca(2+)(in) = Ca(2+)(out). It catalyses the reaction Mg(2+)(in) = Mg(2+)(out). The enzyme catalyses Mn(2+)(in) = Mn(2+)(out). The catalysed reaction is Ni(2+)(in) = Ni(2+)(out). With respect to regulation, inhibited by extracellular zinc ions. Inhibited by intracellular Mg(2+). Activated by the neuroactive steroid pregnenolone sulfate. Negatively regulated by activation of GRM6 receptors in the ON-bipolar cells. Functionally, constitutively open nonselective divalent cation-conducting channels which mediate the influx of Ca(2+), Mg(2+), Mn(2+), Ba(2+), and Ni(2+) into the cytoplasm, leading to membrane depolarization. Impermeable to zinc ions. In addition, forms heteromultimeric ion channels with TRPM3 which are permeable for calcium and zinc ions. Plays an essential role for the depolarizing photoresponse of retinal ON bipolar cells. In the dark, tonic release of glutamate activates the G-protein coupled receptor for glutamate GRM6, its activation induces the release of G(o) protein and the beta-gamma G protein dimer. Both subunits can interact and inactivate the TRPM1 channel. A light onset, induces decrease in glutamate release and deactivation of GRM6 leading to channel opening and membrane depolarization. May play a role in metastasis suppression. This Rattus norvegicus (Rat) protein is Transient receptor potential cation channel subfamily M member 1.